A 613-amino-acid polypeptide reads, in one-letter code: Dihydroxy-acid dehydratase (613 aa).

Asp-81 lines the Mg(2+) pocket. [2Fe-2S] cluster is bound at residue Cys-122. Residues Asp-123 and Lys-124 each contribute to the Mg(2+) site. Lys-124 bears the N6-carboxylysine mark. Cys-195 serves as a coordination point for [2Fe-2S] cluster. Glu-491 contacts Mg(2+). The Proton acceptor role is filled by Ser-517.

This sequence belongs to the IlvD/Edd family. As to quaternary structure, homodimer. [2Fe-2S] cluster is required as a cofactor. The cofactor is Mg(2+).

It catalyses the reaction (2R)-2,3-dihydroxy-3-methylbutanoate = 3-methyl-2-oxobutanoate + H2O. It carries out the reaction (2R,3R)-2,3-dihydroxy-3-methylpentanoate = (S)-3-methyl-2-oxopentanoate + H2O. It functions in the pathway amino-acid biosynthesis; L-isoleucine biosynthesis; L-isoleucine from 2-oxobutanoate: step 3/4. It participates in amino-acid biosynthesis; L-valine biosynthesis; L-valine from pyruvate: step 3/4. In terms of biological role, functions in the biosynthesis of branched-chain amino acids. Catalyzes the dehydration of (2R,3R)-2,3-dihydroxy-3-methylpentanoate (2,3-dihydroxy-3-methylvalerate) into 2-oxo-3-methylpentanoate (2-oxo-3-methylvalerate) and of (2R)-2,3-dihydroxy-3-methylbutanoate (2,3-dihydroxyisovalerate) into 2-oxo-3-methylbutanoate (2-oxoisovalerate), the penultimate precursor to L-isoleucine and L-valine, respectively. The chain is Dihydroxy-acid dehydratase from Hyphomonas neptunium (strain ATCC 15444).